The following is a 156-amino-acid chain: Movement protein P17 (156 aa).

Positions 38-54 are homodimerization; sequence AEDAEEEAIAAQEELEF. Disordered stretches follow at residues 55–80 and 106–156; these read PEDE…EVSP and ASYF…IKRG. An RNA-binding region spans residues 57–156; sequence DEAQARHSCL…RAAPKLIKRG (100 aa). Phosphoserine occurs at positions 71, 79, 137, and 140. Basic residues predominate over residues 144–156; the sequence is KLRRAAPKLIKRG.

It belongs to the polerovirus movement protein family. In terms of assembly, homodimer. In terms of processing, expressed as a nonphosphorylated 20kDa form and a phosphorylated 22kDa form. Phosphorylated by a host PKC-related kinase. Serine phosphorylation is required for plamodesma targeting.

Its subcellular location is the host cell junction. It localises to the host plasmodesma. The protein resides in the host chloroplast envelope. The protein localises to the host Golgi apparatus. It is found in the host mitochondrion outer membrane. Functionally, together with movement protein P3a, facilitates long-distance movement of virions in host. Transports viral genome to neighboring plant cells directly through plasmosdesmata, without any budding. The movement protein allows efficient cell to cell propagation, by bypassing the host cell wall barrier. Binds ssRNA. This is Movement protein P17 from Potato leafroll virus (strain Potato/Canada/Rowhani/1979) (PLrV).